Consider the following 873-residue polypeptide: Leucine--tRNA ligase (873 aa).

A 'HIGH' region motif is present at residues 48–58 (PYPSGKLHMGH). The short motif at 636 to 640 (KMSKS) is the 'KMSKS' region element. Lys639 contributes to the ATP binding site.

The protein belongs to the class-I aminoacyl-tRNA synthetase family.

It is found in the cytoplasm. It carries out the reaction tRNA(Leu) + L-leucine + ATP = L-leucyl-tRNA(Leu) + AMP + diphosphate. The protein is Leucine--tRNA ligase of Cupriavidus metallidurans (strain ATCC 43123 / DSM 2839 / NBRC 102507 / CH34) (Ralstonia metallidurans).